Here is a 41-residue protein sequence, read N- to C-terminus: Photosystem I reaction center subunit IX (41 aa).

The chain crosses the membrane as a helical span at residues 7-27 (YLSTAPVVALIWFTFTAGLLI).

It belongs to the PsaJ family.

Its subcellular location is the plastid. It is found in the chloroplast thylakoid membrane. May help in the organization of the PsaE and PsaF subunits. In Pleurastrum terricola (Filamentous green alga), this protein is Photosystem I reaction center subunit IX.